The sequence spans 252 residues: MILHAQAKHGKPGLPWLVFLHGFSGDCHEWQEVGEAFADYSRLYVDLPGHGGSATISVDGFDDVTDLLCKTLVSYNILNFWLVGYSLGGRVAMMAACQELAGLCGVVVEGGHPGLQNAEQRAERQRSDRQWAQRFRTEPLTAVFADWYQQPVFTSLNDDQRRELVALRSNNNGTTLAAMLEATSLAVQPDLRANLSARTFAFYYLCGERDSKFRALAAELAAECHVIPRAGHNAHRENPAGVIASLAQILRF.

The protein belongs to the AB hydrolase superfamily. MenH family. As to quaternary structure, monomer.

The enzyme catalyses 5-enolpyruvoyl-6-hydroxy-2-succinyl-cyclohex-3-ene-1-carboxylate = (1R,6R)-6-hydroxy-2-succinyl-cyclohexa-2,4-diene-1-carboxylate + pyruvate. It participates in quinol/quinone metabolism; 1,4-dihydroxy-2-naphthoate biosynthesis; 1,4-dihydroxy-2-naphthoate from chorismate: step 3/7. The protein operates within quinol/quinone metabolism; menaquinone biosynthesis. Functionally, catalyzes a proton abstraction reaction that results in 2,5-elimination of pyruvate from 2-succinyl-5-enolpyruvyl-6-hydroxy-3-cyclohexene-1-carboxylate (SEPHCHC) and the formation of 2-succinyl-6-hydroxy-2,4-cyclohexadiene-1-carboxylate (SHCHC). The sequence is that of 2-succinyl-6-hydroxy-2,4-cyclohexadiene-1-carboxylate synthase from Escherichia coli O17:K52:H18 (strain UMN026 / ExPEC).